Consider the following 669-residue polypeptide: Dymeclin (669 aa).

The N-myristoyl glycine moiety is linked to residue Gly2.

This sequence belongs to the dymeclin family. In terms of assembly, interacts with GOLM1 and PPIB. Post-translationally, myristoylated in vitro; myristoylation is not essential for protein targeting to Golgi compartment. In terms of tissue distribution, expressed in most embryo-fetal and adult tissues. Abundant in primary chondrocytes, osteoblasts, cerebellum, kidney, lung, stomach, heart, pancreas and fetal brain. Very low or no expression in the spleen, thymus, esophagus, bladder and thyroid gland.

It is found in the cytoplasm. Its subcellular location is the golgi apparatus. It localises to the membrane. Functionally, necessary for correct organization of Golgi apparatus. Involved in bone development. The sequence is that of Dymeclin (DYM) from Homo sapiens (Human).